The chain runs to 157 residues: Succinate dehydrogenase assembly factor 2-B, mitochondrial (157 aa).

The transit peptide at 1–24 directs the protein to the mitochondrion; the sequence is MLRQFLFSTASRRLVRPMIAPHRS.

It belongs to the SDHAF2 family. In terms of assembly, interacts with the flavoprotein subunit within the SDH catalytic dimer.

The protein localises to the mitochondrion matrix. Plays an essential role in the assembly of succinate dehydrogenase (SDH), an enzyme complex (also referred to as respiratory complex II) that is a component of both the tricarboxylic acid (TCA) cycle and the mitochondrial electron transport chain, and which couples the oxidation of succinate to fumarate with the reduction of ubiquinone (coenzyme Q) to ubiquinol. Required for flavinylation (covalent attachment of FAD) of the flavoprotein subunit of the SDH catalytic dimer. In Drosophila persimilis (Fruit fly), this protein is Succinate dehydrogenase assembly factor 2-B, mitochondrial.